The following is a 215-amino-acid chain: UPF0502 protein Ping_1905 (215 aa).

The protein belongs to the UPF0502 family.

The chain is UPF0502 protein Ping_1905 from Psychromonas ingrahamii (strain DSM 17664 / CCUG 51855 / 37).